The chain runs to 143 residues: Heat shock protein 16 (143 aa).

Positions 30–143 (QIPGELSPSI…SQTKKQIAIK (114 aa)) constitute a sHSP domain.

Belongs to the small heat shock protein (HSP20) family.

The protein localises to the cytoplasm. The protein resides in the nucleus. The protein is Heat shock protein 16 (hsp16) of Schizosaccharomyces pombe (strain 972 / ATCC 24843) (Fission yeast).